The following is a 67-amino-acid chain: Alpha-conotoxin-like Pu1.1 (67 aa).

Residues 1 to 21 form the signal peptide; the sequence is MGMRMMFTVFLLVVLATTVVS. A propeptide spanning residues 22 to 46 is cleaved from the precursor; the sequence is FTSDRTSDGRNAAFNAFDLIALTAR. At glutamine 47 the chain carries Pyrrolidone carboxylic acid. 2 disulfide bridges follow: cysteine 49/cysteine 55 and cysteine 50/cysteine 63. The segment at 51–53 is lacks the Ser-Xaa-Pro motif that is crucial for potent interaction with nAChR; it reads NVP. Cysteine amide is present on cysteine 63.

Belongs to the conotoxin A superfamily. Expressed by the venom duct.

The protein localises to the secreted. Alpha-conotoxins act on postsynaptic membranes, they bind to the nicotinic acetylcholine receptors (nAChR) and thus inhibit them. Has possibly a distinct nAChR binding mode from other alpha-conotoxins, due to a different three residue motif (lacks the Ser-Xaa-Pro motif). In Conus pulicarius (Flea-bitten cone), this protein is Alpha-conotoxin-like Pu1.1.